The sequence spans 424 residues: GTPase Obg (424 aa).

In terms of domain architecture, Obg spans 1–158 (MFVDKARIFV…RWISLELKLL (158 aa)). The 173-residue stretch at 159 to 331 (ADVGLIGFPN…LLKECARVLS (173 aa)) folds into the OBG-type G domain. Residues 165–172 (GFPNVGKS), 190–194 (FTTIT), 212–215 (DIPG), 282–285 (NKAD), and 312–314 (SAA) each bind GTP. Residues serine 172 and threonine 192 each contribute to the Mg(2+) site. Residues 345–424 (RFVPEDKHFT…LNDFEFEFLK (80 aa)) form the OCT domain.

It belongs to the TRAFAC class OBG-HflX-like GTPase superfamily. OBG GTPase family. Monomer. Mg(2+) serves as cofactor.

Its subcellular location is the cytoplasm. Its function is as follows. An essential GTPase which binds GTP, GDP and possibly (p)ppGpp with moderate affinity, with high nucleotide exchange rates and a fairly low GTP hydrolysis rate. Plays a role in control of the cell cycle, stress response, ribosome biogenesis and in those bacteria that undergo differentiation, in morphogenesis control. The sequence is that of GTPase Obg from Clostridium acetobutylicum (strain ATCC 824 / DSM 792 / JCM 1419 / IAM 19013 / LMG 5710 / NBRC 13948 / NRRL B-527 / VKM B-1787 / 2291 / W).